The sequence spans 160 residues: Transcription elongation factor GreA (160 aa).

The stretch at 49–75 (SEYDEAKNDQAFTEGKILQLENKLKNA) forms a coiled coil.

It belongs to the GreA/GreB family.

Its function is as follows. Necessary for efficient RNA polymerase transcription elongation past template-encoded arresting sites. The arresting sites in DNA have the property of trapping a certain fraction of elongating RNA polymerases that pass through, resulting in locked ternary complexes. Cleavage of the nascent transcript by cleavage factors such as GreA or GreB allows the resumption of elongation from the new 3'terminus. GreA releases sequences of 2 to 3 nucleotides. The sequence is that of Transcription elongation factor GreA from Clostridium botulinum (strain Alaska E43 / Type E3).